Consider the following 137-residue polypeptide: Small ribosomal subunit protein uS12 (137 aa).

A disordered region spans residues 1–55; it reads MPTINQLVRKPRKSKVEKSDSPALNKGYNSFKKTQTNVNSPQKRGVCTRVGTMTP. Residues 27–42 show a composition bias toward polar residues; sequence GYNSFKKTQTNVNSPQ. The residue at position 102 (Asp102) is a 3-methylthioaspartic acid.

It belongs to the universal ribosomal protein uS12 family. As to quaternary structure, part of the 30S ribosomal subunit. Contacts proteins S8 and S17. May interact with IF1 in the 30S initiation complex.

Its function is as follows. With S4 and S5 plays an important role in translational accuracy. Functionally, interacts with and stabilizes bases of the 16S rRNA that are involved in tRNA selection in the A site and with the mRNA backbone. Located at the interface of the 30S and 50S subunits, it traverses the body of the 30S subunit contacting proteins on the other side and probably holding the rRNA structure together. The combined cluster of proteins S8, S12 and S17 appears to hold together the shoulder and platform of the 30S subunit. The polypeptide is Small ribosomal subunit protein uS12 (Enterococcus faecalis (strain ATCC 700802 / V583)).